Reading from the N-terminus, the 142-residue chain is Baculoviral IAP repeat-containing protein 5 (142 aa).

A BIR repeat occupies 18 to 88 (RISTFKNWPF…KHSSGCAFLS (71 aa)). Serine 20 is subject to Phosphoserine; by AURKC. Lysine 23 bears the N6-acetyllysine mark. The residue at position 34 (threonine 34) is a Phosphothreonine; by CDK1 and CDK15. At threonine 48 the chain carries Phosphothreonine. 4 residues coordinate Zn(2+): cysteine 57, cysteine 60, histidine 77, and cysteine 84. 4 positions are modified to N6-acetyllysine: lysine 90, lysine 110, lysine 112, and lysine 115. Threonine 117 is subject to Phosphothreonine; by AURKB. Lysine 129 carries the N6-acetyllysine modification.

This sequence belongs to the IAP family. Monomer or homodimer. Exists as a homodimer in the apo state and as a monomer in the CPC-bound state. The monomer protects cells against apoptosis more efficiently than the dimer. Only the dimeric form is capable of enhancing tubulin stability in cells. When phosphorylated, interacts with LAMTOR5/HBXIP; the resulting complex binds pro-CASP9, as well as active CASP9, but much less efficiently. Component of the chromosomal passenger complex (CPC) composed of at least BIRC5/survivin, CDCA8/borealin, INCENP, AURKB or AURKC; in the complex forms a triple-helix bundle-based subcomplex with INCENP and CDCA8. Interacts with JTB. Interacts (via BIR domain) with histone H3 phosphorylated at 'Thr-3' (H3pT3). Interacts with EVI5. Interacts with GTP-bound RAN in both the S and M phases of the cell cycle. Interacts with USP9X. Interacts with tubulin. Interacts with BIRC2/c-IAP1. The acetylated form at Lys-129 interacts with STAT3. The monomeric form deacetylated at Lys-129 interacts with XPO1/CRM1. The monomeric form interacts with XIAP/BIRC4. Both the dimeric and monomeric form can interact with DIABLO/SMAC. Interacts with BIRC6/bruce. Interacts with FBXL7; this interaction facilitates the polyubiquitination and subsequent proteasomal degradation of BIRC5 by the SCF(FBXL7) E3 ubiquitin-protein ligase complex. Ubiquitinated by the Cul9-RING ubiquitin-protein ligase complex, leading to its degradation. Ubiquitination is required for centrosomal targeting. Deubiquitinated by USP35 or USP38; leading to stabilization. Post-translationally, acetylation at Lys-129 results in its homodimerization, while deacetylation promotes the formation of monomers which heterodimerize with XPO1/CRM1 which facilitates its nuclear export. The acetylated form represses STAT3 transactivation. The dynamic equilibrium between its acetylation and deacetylation at Lys-129 determines its interaction with XPO1/CRM1, its subsequent subcellular localization, and its ability to inhibit STAT3 transactivation. In terms of processing, in vitro phosphorylation at Thr-117 by AURKB prevents interaction with INCENP and localization to mitotic chromosomes. Phosphorylation at Thr-48 by CK2 is critical for its mitotic and anti-apoptotic activities. Phosphorylation at Thr-34 by CDK15 is critical for its anti-apoptotic activity. Phosphorylation at Ser-20 by AURKC is critical for regulation of proper chromosome alignment and segregation, and possibly cytokinesis.

Its subcellular location is the cytoplasm. It localises to the nucleus. It is found in the chromosome. The protein resides in the centromere. The protein localises to the cytoskeleton. Its subcellular location is the spindle. It localises to the kinetochore. It is found in the midbody. Multitasking protein that has dual roles in promoting cell proliferation and preventing apoptosis. Component of a chromosome passage protein complex (CPC) which is essential for chromosome alignment and segregation during mitosis and cytokinesis. Acts as an important regulator of the localization of this complex; directs CPC movement to different locations from the inner centromere during prometaphase to midbody during cytokinesis and participates in the organization of the center spindle by associating with polymerized microtubules. Involved in the recruitment of CPC to centromeres during early mitosis via association with histone H3 phosphorylated at 'Thr-3' (H3pT3) during mitosis. The complex with RAN plays a role in mitotic spindle formation by serving as a physical scaffold to help deliver the RAN effector molecule TPX2 to microtubules. May counteract a default induction of apoptosis in G2/M phase. The acetylated form represses STAT3 transactivation of target gene promoters. May play a role in neoplasia. Inhibitor of CASP3 and CASP7. Essential for the maintenance of mitochondrial integrity and function. This is Baculoviral IAP repeat-containing protein 5 (BIRC5) from Sus scrofa (Pig).